We begin with the raw amino-acid sequence, 447 residues long: Chorismate synthase, chloroplastic (447 aa).

The segment at M1–G24 is disordered. Residues M1–Q57 constitute a chloroplast transit peptide.

It belongs to the chorismate synthase family. As to quaternary structure, homotetramer. FMNH2 serves as cofactor. The N-terminus is blocked.

The protein resides in the plastid. It is found in the chloroplast. It carries out the reaction 5-O-(1-carboxyvinyl)-3-phosphoshikimate = chorismate + phosphate. It participates in metabolic intermediate biosynthesis; chorismate biosynthesis; chorismate from D-erythrose 4-phosphate and phosphoenolpyruvate: step 7/7. In terms of biological role, catalyzes the last common step of the biosynthesis of aromatic amino acids, produced via the shikimic acid pathway. In Capnoides sempervirens (Rock-harlequin), this protein is Chorismate synthase, chloroplastic.